A 358-amino-acid polypeptide reads, in one-letter code: Phenylalanine--tRNA ligase alpha subunit (358 aa).

Glu262 serves as a coordination point for Mg(2+).

This sequence belongs to the class-II aminoacyl-tRNA synthetase family. Phe-tRNA synthetase alpha subunit type 1 subfamily. As to quaternary structure, tetramer of two alpha and two beta subunits. The cofactor is Mg(2+).

It is found in the cytoplasm. It carries out the reaction tRNA(Phe) + L-phenylalanine + ATP = L-phenylalanyl-tRNA(Phe) + AMP + diphosphate + H(+). The polypeptide is Phenylalanine--tRNA ligase alpha subunit (pheS) (Streptomyces coelicolor (strain ATCC BAA-471 / A3(2) / M145)).